The primary structure comprises 570 residues: Sulfite reductase [NADPH] hemoprotein beta-component (570 aa).

The [4Fe-4S] cluster site is built by cysteine 434, cysteine 440, cysteine 479, and cysteine 483. Residue cysteine 483 coordinates siroheme.

This sequence belongs to the nitrite and sulfite reductase 4Fe-4S domain family. As to quaternary structure, alpha(8)-beta(8). The alpha component is a flavoprotein, the beta component is a hemoprotein. Siroheme serves as cofactor. The cofactor is [4Fe-4S] cluster.

It carries out the reaction hydrogen sulfide + 3 NADP(+) + 3 H2O = sulfite + 3 NADPH + 4 H(+). Its pathway is sulfur metabolism; hydrogen sulfide biosynthesis; hydrogen sulfide from sulfite (NADPH route): step 1/1. Its function is as follows. Component of the sulfite reductase complex that catalyzes the 6-electron reduction of sulfite to sulfide. This is one of several activities required for the biosynthesis of L-cysteine from sulfate. The chain is Sulfite reductase [NADPH] hemoprotein beta-component from Cronobacter sakazakii (strain ATCC BAA-894) (Enterobacter sakazakii).